A 399-amino-acid polypeptide reads, in one-letter code: Methylthioribose kinase (399 aa).

ATP-binding positions include asparagine 40, lysine 57, and 111–113; that span reads EDL. Aspartate 229 is a binding site for substrate. 246-248 lines the ATP pocket; sequence DAE. Residue arginine 344 participates in substrate binding.

The protein belongs to the methylthioribose kinase family. Homodimer.

The enzyme catalyses 5-(methylsulfanyl)-D-ribose + ATP = 5-(methylsulfanyl)-alpha-D-ribose 1-phosphate + ADP + H(+). Its pathway is amino-acid biosynthesis; L-methionine biosynthesis via salvage pathway; S-methyl-5-thio-alpha-D-ribose 1-phosphate from S-methyl-5'-thioadenosine (hydrolase route): step 2/2. In terms of biological role, catalyzes the phosphorylation of methylthioribose into methylthioribose-1-phosphate. This chain is Methylthioribose kinase, found in Klebsiella pneumoniae subsp. pneumoniae (strain ATCC 700721 / MGH 78578).